The sequence spans 121 residues: Large ribosomal subunit protein uL18 (121 aa).

The protein belongs to the universal ribosomal protein uL18 family. As to quaternary structure, part of the 50S ribosomal subunit; part of the 5S rRNA/L5/L18/L25 subcomplex. Contacts the 5S and 23S rRNAs.

Its function is as follows. This is one of the proteins that bind and probably mediate the attachment of the 5S RNA into the large ribosomal subunit, where it forms part of the central protuberance. This is Large ribosomal subunit protein uL18 from Polaromonas naphthalenivorans (strain CJ2).